The following is a 638-amino-acid chain: Threonine--tRNA ligase (638 aa).

Positions 1–61 (MPNIKLPDGS…ERDSELAILT (61 aa)) constitute a TGS domain. The catalytic stretch occupies residues 242–533 (DHRKLGRQLD…LIEHYAGAMP (292 aa)). 3 residues coordinate Zn(2+): C333, H384, and H510.

This sequence belongs to the class-II aminoacyl-tRNA synthetase family. In terms of assembly, homodimer. The cofactor is Zn(2+).

The protein resides in the cytoplasm. The enzyme catalyses tRNA(Thr) + L-threonine + ATP = L-threonyl-tRNA(Thr) + AMP + diphosphate + H(+). Its function is as follows. Catalyzes the attachment of threonine to tRNA(Thr) in a two-step reaction: L-threonine is first activated by ATP to form Thr-AMP and then transferred to the acceptor end of tRNA(Thr). Also edits incorrectly charged L-seryl-tRNA(Thr). The sequence is that of Threonine--tRNA ligase from Azoarcus sp. (strain BH72).